We begin with the raw amino-acid sequence, 213 residues long: Na(+)-translocating NADH-quinone reductase subunit D (213 aa).

Helical transmembrane passes span 22–42, 43–63, 77–97, 101–121, 131–151, and 183–203; these read LIAI…TTAL, TMGF…SLLR, IIIS…FFTI, LSVF…AESM, FLDG…ISII, and LGLM…IWIV.

It belongs to the NqrDE/RnfAE family. Composed of six subunits; NqrA, NqrB, NqrC, NqrD, NqrE and NqrF.

Its subcellular location is the cell inner membrane. The enzyme catalyses a ubiquinone + n Na(+)(in) + NADH + H(+) = a ubiquinol + n Na(+)(out) + NAD(+). Its function is as follows. NQR complex catalyzes the reduction of ubiquinone-1 to ubiquinol by two successive reactions, coupled with the transport of Na(+) ions from the cytoplasm to the periplasm. NqrA to NqrE are probably involved in the second step, the conversion of ubisemiquinone to ubiquinol. This chain is Na(+)-translocating NADH-quinone reductase subunit D, found in Chlamydia trachomatis serovar A (strain ATCC VR-571B / DSM 19440 / HAR-13).